Here is a 236-residue protein sequence, read N- to C-terminus: Carbonyl reductase family member 4 (236 aa).

NADP(+)-binding positions include 11-14 (SRGI), 34-35 (RN), Asp55, and 82-84 (SAG). Substrate is bound at residue Ser134. Residues Tyr147, Lys151, and 180 to 182 (IRT) each bind NADP(+). The active-site Proton acceptor is Tyr147.

Belongs to the short-chain dehydrogenases/reductases (SDR) family. As to quaternary structure, homotetramer (in vitro). Heterotetramer with HSD17B8; contains two molecules each of HSD17B8 and CBR4.

It is found in the mitochondrion matrix. It functions in the pathway lipid metabolism; fatty acid biosynthesis. The heterotetramer with HSD17B8 has NADH-dependent 3-ketoacyl-acyl carrier protein reductase activity, and thereby plays a role in mitochondrial fatty acid biosynthesis. Within the heterotetramer, HSD17B8 binds NADH; CBR4 binds NADPD. The homotetramer has NADPH-dependent quinone reductase activity. Both homotetramer and the heterotetramer have broad in vitro substrate specificity and can reduce 9,10-phenanthrenequinone, 1,4-benzoquinone and various other o-quinones and p-quinones. This chain is Carbonyl reductase family member 4 (cbr4), found in Xenopus laevis (African clawed frog).